A 71-amino-acid polypeptide reads, in one-letter code: Small ribosomal subunit protein bS21B (71 aa).

This sequence belongs to the bacterial ribosomal protein bS21 family.

The polypeptide is Small ribosomal subunit protein bS21B (Rhizobium johnstonii (strain DSM 114642 / LMG 32736 / 3841) (Rhizobium leguminosarum bv. viciae)).